The sequence spans 700 residues: Calpain-2 catalytic subunit (700 aa).

Position 2 is an N-acetylalanine (alanine 2). Positions 2 to 19 (AGIAAKLVKDREAAEGLG) are cleaved as a propeptide — anchors to the small subunit. A Calpain catalytic domain is found at 45 to 344 (LFQDPSFPAI…YSRLEICNLT (300 aa)). Ca(2+) is bound by residues isoleucine 89, glycine 91, and aspartate 96. Cysteine 105 is an active-site residue. Glutamate 175, glutamine 229, and lysine 230 together coordinate Ca(2+). Active-site residues include histidine 262 and asparagine 286. Residues glutamate 292, aspartate 299, and glutamate 323 each contribute to the Ca(2+) site. The segment at 345-514 (PDTLTSDTYK…KKADYQAVDD (170 aa)) is domain III. Positions 515 to 529 (EIEANLEEFDISEDD) are linker. A domain IV region spans residues 530–700 (IDDGFRRLFA…LISWLCFSVL (171 aa)). The Ca(2+) site is built by alanine 542, aspartate 545, glutamate 547, glutamate 552, aspartate 585, aspartate 587, serine 589, lysine 591, glutamate 596, aspartate 615, aspartate 617, serine 619, threonine 621, glutamate 626, aspartate 658, and asparagine 661. EF-hand domains lie at 572 to 605 (FSIE…TKIQ) and 602 to 637 (TKIQ…AGFK). An EF-hand 3 domain is found at 667 to 700 (VRLETLFKIFKQLDPENTGTIELDLISWLCFSVL).

It belongs to the peptidase C2 family. As to quaternary structure, forms a heterodimer with a small (regulatory) subunit (CAPNS1). Interacts with CPEB3; this leads to cleavage of CPEB3. The cofactor is Ca(2+).

The protein resides in the cytoplasm. Its subcellular location is the cell membrane. The enzyme catalyses Broad endopeptidase specificity.. Activated by 200-1000 micromolar concentrations of calcium and inhibited by calpastatin. Calcium-regulated non-lysosomal thiol-protease which catalyzes limited proteolysis of substrates involved in cytoskeletal remodeling and signal transduction. Proteolytically cleaves MYOC at 'Arg-226'. Proteolytically cleaves CPEB3 following neuronal stimulation which abolishes CPEB3 translational repressor activity, leading to translation of CPEB3 target mRNAs. This is Calpain-2 catalytic subunit (CAPN2) from Macaca fascicularis (Crab-eating macaque).